Here is a 282-residue protein sequence, read N- to C-terminus: MNKSQLYPDSPLTDQDFNQLDQTVIEAARRQLVGRRFIELYGPLGRGMQSVFNDIFMESHEAKMDFQGSFDTEVESSRRVNYTIPMLYKDFVLYWRDLEQSKALDIPIDFSVAANAARDVAFLEDQMIFHGSKEFDIPGLMNVKGRLTHLIGNWYESGNAFQDIVEARNKLLEMNHNGPYALVLSPELYSLLHRVHKDTNVLEIEHVRELITAGVFQSPVLKGKSGVIVNTGRNNLDLAISEDFETAYLGEEGMNHPFRVYETVVLRIKRPAAICTLIDPEE.

It belongs to the encapsulin family. Family 1 subfamily. As to quaternary structure, initially thought to form a 180 subunit shell. Forms hollow shells composed of 240 subunits, making a shell about 42-43 nm in diameter. The monomer is capable of assuming 4 different conformations which allows packaging into the icosahedron. The shell has 12 pentameric and 30 hexameric capsomers which form the vertices and faces of the icosahedral nanocompartment.

It is found in the encapsulin nanocompartment. Shell component of a type 1 encapsulin nanocompartment. Assembles into proteinaceous icosahedral shells 42-43 nm in diameter with an iron- and phosphorus-rich core (1Fe:1.1P) which can store over 23,000-35,000 iron atoms (with a calculated maximum of 83,000 Fe). There are 2 types of negatively charged open pores in the cryo-electron structure; a 3-fold pore where 3 hexamers meet with a minimal size of 7.2 Angstroms and a 5-fold pore where pentamers meet with a minimal size of 2.3 Angstroms. The 2-fold pore seen in other encapsulin nanocompartments is closed. Empty compartments can be generated in E.coli. Both types of pore have extra density in their centers in the structure. 2 different cargo proteins have been identified (IMEF and Fer); when both are expressed in E.coli with the shell protein only IMEF is detected within the nanocompartment. E.coli expressing all 3 genes stores the largest amount of iron and is protected from Fe/H2O2-induced oxidative stress. Part of the iron-mineralizing encapsulin-associated Firmicute (IMEF) system. In Bacillus thermotolerans (Quasibacillus thermotolerans), this protein is Type 1 encapsulin shell protein.